The chain runs to 264 residues: 3-methyl-2-oxobutanoate hydroxymethyltransferase (264 aa).

The Mg(2+) site is built by aspartate 45 and aspartate 84. 3-methyl-2-oxobutanoate is bound by residues aspartate 45–serine 46, aspartate 84, and lysine 112. Residue glutamate 114 coordinates Mg(2+). Glutamate 181 serves as the catalytic Proton acceptor.

Belongs to the PanB family. As to quaternary structure, homodecamer; pentamer of dimers. Mg(2+) serves as cofactor.

Its subcellular location is the cytoplasm. The catalysed reaction is 3-methyl-2-oxobutanoate + (6R)-5,10-methylene-5,6,7,8-tetrahydrofolate + H2O = 2-dehydropantoate + (6S)-5,6,7,8-tetrahydrofolate. Its pathway is cofactor biosynthesis; (R)-pantothenate biosynthesis; (R)-pantoate from 3-methyl-2-oxobutanoate: step 1/2. Catalyzes the reversible reaction in which hydroxymethyl group from 5,10-methylenetetrahydrofolate is transferred onto alpha-ketoisovalerate to form ketopantoate. In Pectobacterium atrosepticum (strain SCRI 1043 / ATCC BAA-672) (Erwinia carotovora subsp. atroseptica), this protein is 3-methyl-2-oxobutanoate hydroxymethyltransferase.